The chain runs to 27 residues: CD59 glycoprotein (27 aa).

2 disulfide bridges follow: cysteine 3/cysteine 25 and cysteine 6/cysteine 12. Asparagine 17 is a glycosylation site (N-linked (GlcNAc...) asparagine).

In terms of assembly, interacts with T-cell surface antigen CD2. Post-translationally, N- and O-glycosylated. Expressed in erythrocytes and lymphocytes. Not detected in platelets.

It localises to the cell membrane. It is found in the secreted. In terms of biological role, potent inhibitor of the complement membrane attack complex (MAC) action, which protects self-cells from damage during complement activation. Acts by binding to the beta-haipins of C8 (C8A and C8B) components of the assembling MAC, forming an intermolecular beta-sheet that prevents incorporation of the multiple copies of C9 required for complete formation of the osmolytic pore. The protein is CD59 glycoprotein of Ovis aries (Sheep).